Reading from the N-terminus, the 599-residue chain is Membrane protein insertase YidC (599 aa).

Residues 6 to 26 form a helical membrane-spanning segment; the sequence is NYFIAIALSVVIVLAWQFLYM. The tract at residues 35 to 78 is disordered; that stretch reads RAEEARQAQQQTTQQQPAPGAAPGATVEGAPPASSTQAAATATR. Residues 41–76 are compositionally biased toward low complexity; that stretch reads QAQQQTTQQQPAPGAAPGATVEGAPPASSTQAAATA. The next 4 membrane-spanning stretches (helical) occupy residues 378–398, 448–468, 501–521, and 536–556; these read FGVA…PLAS, WPML…YVTI, VPHF…MFLQ, and IFTW…AGLV.

The protein belongs to the OXA1/ALB3/YidC family. Type 1 subfamily. Interacts with the Sec translocase complex via SecD. Specifically interacts with transmembrane segments of nascent integral membrane proteins during membrane integration.

The protein localises to the cell inner membrane. In terms of biological role, required for the insertion and/or proper folding and/or complex formation of integral membrane proteins into the membrane. Involved in integration of membrane proteins that insert both dependently and independently of the Sec translocase complex, as well as at least some lipoproteins. Aids folding of multispanning membrane proteins. The protein is Membrane protein insertase YidC of Agrobacterium fabrum (strain C58 / ATCC 33970) (Agrobacterium tumefaciens (strain C58)).